Consider the following 78-residue polypeptide: Metallothionein-like protein type 2 (78 aa).

The protein belongs to the metallothionein superfamily. Type 15 family.

Metallothioneins have a high content of cysteine residues that bind various heavy metals. This Nicotiana glutinosa (Tobacco) protein is Metallothionein-like protein type 2.